The sequence spans 306 residues: Acetyl-coenzyme A carboxylase carboxyl transferase subunit beta (306 aa).

The 270-residue stretch at 25 to 294 (LWIKDPTSGE…VFNPSDPSPT (270 aa)) folds into the CoA carboxyltransferase N-terminal domain. Residues 286–306 (FNPSDPSPTDSQTSLSTTKAA) are disordered. The segment covering 288–306 (PSDPSPTDSQTSLSTTKAA) has biased composition (low complexity).

It belongs to the AccD/PCCB family. As to quaternary structure, acetyl-CoA carboxylase is a heterohexamer composed of biotin carboxyl carrier protein (AccB), biotin carboxylase (AccC) and two subunits each of ACCase subunit alpha (AccA) and ACCase subunit beta (AccD).

Its subcellular location is the cytoplasm. The catalysed reaction is N(6)-carboxybiotinyl-L-lysyl-[protein] + acetyl-CoA = N(6)-biotinyl-L-lysyl-[protein] + malonyl-CoA. The protein operates within lipid metabolism; malonyl-CoA biosynthesis; malonyl-CoA from acetyl-CoA: step 1/1. Functionally, component of the acetyl coenzyme A carboxylase (ACC) complex. Biotin carboxylase (BC) catalyzes the carboxylation of biotin on its carrier protein (BCCP) and then the CO(2) group is transferred by the transcarboxylase to acetyl-CoA to form malonyl-CoA. In Bartonella grahamii (strain as4aup), this protein is Acetyl-coenzyme A carboxylase carboxyl transferase subunit beta.